The chain runs to 154 residues: Transcriptional repressor NrdR (154 aa).

The segment at 1–22 is disordered; sequence MRCPFCGNDDTQVKDSRPTEDN. A zinc finger spans residues 3–34; it reads CPFCGNDDTQVKDSRPTEDNSAIRRRRFCPAC. Positions 11 to 22 are enriched in basic and acidic residues; that stretch reads TQVKDSRPTEDN. Residues 49–139 form the ATP-cone domain; that stretch reads LTVVKSGGSR…VYKDFREVTD (91 aa).

This sequence belongs to the NrdR family. Requires Zn(2+) as cofactor.

Functionally, negatively regulates transcription of bacterial ribonucleotide reductase nrd genes and operons by binding to NrdR-boxes. The protein is Transcriptional repressor NrdR of Rhodospirillum centenum (strain ATCC 51521 / SW).